Here is a 182-residue protein sequence, read N- to C-terminus: Peptidyl-tRNA hydrolase (182 aa).

Tyr14 contributes to the tRNA binding site. His19 serves as the catalytic Proton acceptor. The tRNA site is built by Phe64, Asn66, and Asn112.

Belongs to the PTH family. Monomer.

The protein localises to the cytoplasm. The catalysed reaction is an N-acyl-L-alpha-aminoacyl-tRNA + H2O = an N-acyl-L-amino acid + a tRNA + H(+). Functionally, hydrolyzes ribosome-free peptidyl-tRNAs (with 1 or more amino acids incorporated), which drop off the ribosome during protein synthesis, or as a result of ribosome stalling. Its function is as follows. Catalyzes the release of premature peptidyl moieties from peptidyl-tRNA molecules trapped in stalled 50S ribosomal subunits, and thus maintains levels of free tRNAs and 50S ribosomes. In Wolbachia sp. subsp. Brugia malayi (strain TRS), this protein is Peptidyl-tRNA hydrolase.